Consider the following 202-residue polypeptide: Small ribosomal subunit protein uS4c (202 aa).

The region spanning 90 to 154 (MRLDNILFRL…SQSIITKNLN (65 aa)) is the S4 RNA-binding domain.

This sequence belongs to the universal ribosomal protein uS4 family. As to quaternary structure, part of the 30S ribosomal subunit. Contacts protein S5. The interaction surface between S4 and S5 is involved in control of translational fidelity.

The protein resides in the plastid. The protein localises to the chloroplast. In terms of biological role, one of the primary rRNA binding proteins, it binds directly to 16S rRNA where it nucleates assembly of the body of the 30S subunit. Its function is as follows. With S5 and S12 plays an important role in translational accuracy. The polypeptide is Small ribosomal subunit protein uS4c (rps4) (Monoclea forsteri (Liverwort)).